Here is a 208-residue protein sequence, read N- to C-terminus: Ribosomal RNA large subunit methyltransferase E (208 aa).

Glycine 63, tryptophan 65, aspartate 83, aspartate 99, and aspartate 124 together coordinate S-adenosyl-L-methionine. Lysine 164 (proton acceptor) is an active-site residue.

This sequence belongs to the class I-like SAM-binding methyltransferase superfamily. RNA methyltransferase RlmE family.

It is found in the cytoplasm. It carries out the reaction uridine(2552) in 23S rRNA + S-adenosyl-L-methionine = 2'-O-methyluridine(2552) in 23S rRNA + S-adenosyl-L-homocysteine + H(+). Specifically methylates the uridine in position 2552 of 23S rRNA at the 2'-O position of the ribose in the fully assembled 50S ribosomal subunit. The protein is Ribosomal RNA large subunit methyltransferase E of Salmonella agona (strain SL483).